The following is a 182-amino-acid chain: Plasmolipin (182 aa).

The segment at methionine 1–glycine 20 is disordered. Residues methionine 1 to serine 35 are Cytoplasmic-facing. The span at lysine 7–alanine 16 shows a compositional bias: polar residues. Phosphoserine is present on serine 9. The region spanning phenylalanine 32–arginine 166 is the MARVEL domain. Residues alanine 36 to alanine 56 traverse the membrane as a helical segment. Residues aspartate 57–tryptophan 68 are Extracellular-facing. The helical transmembrane segment at valine 69–phenylalanine 89 threads the bilayer. Over glutamine 90–proline 99 the chain is Cytoplasmic. Residues tryptophan 100–valine 120 traverse the membrane as a helical segment. At alanine 121–serine 141 the chain is on the extracellular side. A helical transmembrane segment spans residues alanine 142–phenylalanine 162. Over glutamine 163–serine 182 the chain is Cytoplasmic.

Belongs to the MAL family. Forms oligomers. In terms of processing, phosphorylated. In terms of tissue distribution, detected to the sciatic nerve, brain and kidney. In the sciatic nerve, found in Schwann cells; in the brain, in developing oligodendrocytes, especially of the corpus callosum, of cortical white matter, in the optic nerve and in the stratum radiatum and stratum oriens of the hippocampus. In kidney, segregated to the apical surface of renal tubular epithelia.

It is found in the cell membrane. The protein localises to the myelin membrane. The protein resides in the apical cell membrane. In terms of biological role, main component of the myelin sheath that plays an important role in myelin membrane biogenesis and myelination. Plays an essential function in apical endocytosis. Regulates epithelial development through the regulation of apical endocytosis. Part of the intracellular machinery that mediates basolateral-to-apical transport of ICAM-1, an essential adhesion receptor in epithelial cells, from the subapical compartment in hepatic epithelial cells. The polypeptide is Plasmolipin (Pllp) (Rattus norvegicus (Rat)).